The primary structure comprises 333 residues: MLKEENTQEILHDLGEQEILNRLRKYMDYGQIDDDTALIKSYKKELIINTDMLVEDVHFSEITTNPNHIGWKAVATNLSDLACSGLEEVIGITVGLSAPSSTPWSWVDGVYTGIKAALNKFGGKLLGGDCSNGKQKTLCITALGTKGPLNLHRSNARPGDYLITSGPHGLSRLGLSLLLSDPITKSINVPNLLKEHAIKAHQEPQPPIKALQTLLKCKPYAMPWNAAATDSSDGLLEAIESLCRSSNCTAVVDHKNLPKHADWPSGKQWNDWCLEGGEDFELVVSLPPNWAKAWLKAMPCTKAIGRMKEGPAKAMWSNGETIQKAMDTKFEHF.

Aspartate 35, threonine 50, and aspartate 51 together coordinate Mg(2+). Histidine 58 contacts substrate. Aspartate 80 serves as a coordination point for Mg(2+). ATP contacts are provided by residues tyrosine 111, 128-129, and arginine 153; that span reads GD. Mg(2+) is bound at residue aspartate 129. Aspartate 230 lines the Mg(2+) pocket. Serine 232 is an ATP binding site. Aspartate 233 is a Mg(2+) binding site. Substrate-binding residues include glutamate 278 and phenylalanine 330.

Belongs to the thiamine-monophosphate kinase family.

The catalysed reaction is thiamine phosphate + ATP = thiamine diphosphate + ADP. Its pathway is cofactor biosynthesis; thiamine diphosphate biosynthesis; thiamine diphosphate from thiamine phosphate: step 1/1. Functionally, catalyzes the ATP-dependent phosphorylation of thiamine-monophosphate (TMP) to form thiamine-pyrophosphate (TPP), the active form of vitamin B1. In Prochlorococcus marinus (strain SARG / CCMP1375 / SS120), this protein is Thiamine-monophosphate kinase.